The chain runs to 486 residues: Bifunctional protein GlmU (486 aa).

Positions 1–241 are pyrophosphorylase; it reads MSASDSSSAV…ARELAGVNDR (241 aa). UDP-N-acetyl-alpha-D-glucosamine-binding positions include 13–16, Lys27, Gln84, and 89–90; these read LAAG and GT. Asp114 lines the Mg(2+) pocket. UDP-N-acetyl-alpha-D-glucosamine-binding residues include Gly151, Glu166, Asn181, and Asn239. Asn239 provides a ligand contact to Mg(2+). The linker stretch occupies residues 242–262; the sequence is VQLAEAGAELNRRTVEAAMRG. An N-acetyltransferase region spans residues 263-486; that stretch reads GATIVDPATT…AQNSVPNQEG (224 aa). Residues Arg344 and Lys362 each contribute to the UDP-N-acetyl-alpha-D-glucosamine site. Catalysis depends on His374, which acts as the Proton acceptor. Tyr377 and Asn388 together coordinate UDP-N-acetyl-alpha-D-glucosamine. Acetyl-CoA contacts are provided by residues Ala391, 397–398, Ser416, and Ala434; that span reads NY. The segment at 464 to 486 is disordered; the sequence is KRPGTAAADAAAAAQNSVPNQEG.

This sequence in the N-terminal section; belongs to the N-acetylglucosamine-1-phosphate uridyltransferase family. The protein in the C-terminal section; belongs to the transferase hexapeptide repeat family. Homotrimer. Mg(2+) is required as a cofactor.

It is found in the cytoplasm. It carries out the reaction alpha-D-glucosamine 1-phosphate + acetyl-CoA = N-acetyl-alpha-D-glucosamine 1-phosphate + CoA + H(+). It catalyses the reaction N-acetyl-alpha-D-glucosamine 1-phosphate + UTP + H(+) = UDP-N-acetyl-alpha-D-glucosamine + diphosphate. It functions in the pathway nucleotide-sugar biosynthesis; UDP-N-acetyl-alpha-D-glucosamine biosynthesis; N-acetyl-alpha-D-glucosamine 1-phosphate from alpha-D-glucosamine 6-phosphate (route II): step 2/2. The protein operates within nucleotide-sugar biosynthesis; UDP-N-acetyl-alpha-D-glucosamine biosynthesis; UDP-N-acetyl-alpha-D-glucosamine from N-acetyl-alpha-D-glucosamine 1-phosphate: step 1/1. Its pathway is bacterial outer membrane biogenesis; LPS lipid A biosynthesis. Catalyzes the last two sequential reactions in the de novo biosynthetic pathway for UDP-N-acetylglucosamine (UDP-GlcNAc). The C-terminal domain catalyzes the transfer of acetyl group from acetyl coenzyme A to glucosamine-1-phosphate (GlcN-1-P) to produce N-acetylglucosamine-1-phosphate (GlcNAc-1-P), which is converted into UDP-GlcNAc by the transfer of uridine 5-monophosphate (from uridine 5-triphosphate), a reaction catalyzed by the N-terminal domain. The chain is Bifunctional protein GlmU from Corynebacterium efficiens (strain DSM 44549 / YS-314 / AJ 12310 / JCM 11189 / NBRC 100395).